A 147-amino-acid chain; its full sequence is FALSWRSYKHTNSQFLYFAPDLIFDEERMRQSAMFELCQGMHQISLQFVRLQLSFEEYTIMKVLLLLSTVPKDGLKSQAAFEEMRANYIKELKKMVTKCPSNSGQSWQRFYQLTKLLDSMHDLVSDLLEFCFYTFRESQALKVEFPA.

Residues Phe-1–Ala-147 enclose the NR LBD domain. Arg-6 and Thr-134 together coordinate 21-hydroxyprogesterone. Arg-6 and Thr-134 together coordinate aldosterone. Progesterone is bound by residues Arg-6 and Thr-134.

Belongs to the nuclear hormone receptor family. NR3 subfamily.

It is found in the cytoplasm. The protein localises to the nucleus. Functionally, receptor for both mineralocorticoids (MC) such as aldosterone and glucocorticoids (GC) such as corticosterone or cortisol. Binds to mineralocorticoid response elements (MRE) and transactivates target genes. The effect of MC is to increase ion and water transport and thus raise extracellular fluid volume and blood pressure and lower potassium levels. This Gallus gallus (Chicken) protein is Mineralocorticoid receptor (NR3C2).